The primary structure comprises 154 residues: Large ribosomal subunit protein uL13 (154 aa).

This sequence belongs to the universal ribosomal protein uL13 family. As to quaternary structure, part of the 50S ribosomal subunit.

Functionally, this protein is one of the early assembly proteins of the 50S ribosomal subunit, although it is not seen to bind rRNA by itself. It is important during the early stages of 50S assembly. This chain is Large ribosomal subunit protein uL13, found in Bradyrhizobium diazoefficiens (strain JCM 10833 / BCRC 13528 / IAM 13628 / NBRC 14792 / USDA 110).